The chain runs to 634 residues: Chaperone protein HtpG (634 aa).

The segment at M1–R342 is a; substrate-binding. Residues E343–Q559 form a b region. A c region spans residues I560–A634.

This sequence belongs to the heat shock protein 90 family. Homodimer.

The protein resides in the cytoplasm. In terms of biological role, molecular chaperone. Has ATPase activity. In Pseudomonas paraeruginosa (strain DSM 24068 / PA7) (Pseudomonas aeruginosa (strain PA7)), this protein is Chaperone protein HtpG.